A 280-amino-acid polypeptide reads, in one-letter code: Trypsin zeta (280 aa).

Residues 1–22 form the signal peptide; that stretch reads MSSSWIVGLLAFLVSLVALTQG. Residues 23–38 constitute a propeptide, activation peptide; that stretch reads LPLLEDLDEKSVPDGR. One can recognise a Peptidase S1 domain in the interval 39 to 278; sequence IVGGYATDIA…LRPWIDAVLA (240 aa). A disulfide bond links Cys72 and Cys88. Active-site charge relay system residues include His87 and Asp134. Intrachain disulfides connect Cys198/Cys218 and Cys230/Cys254. Residue Ser234 is the Charge relay system of the active site.

Belongs to the peptidase S1 family.

The protein resides in the secreted. Its subcellular location is the extracellular space. The catalysed reaction is Preferential cleavage: Arg-|-Xaa, Lys-|-Xaa.. This chain is Trypsin zeta (zetaTry), found in Drosophila melanogaster (Fruit fly).